The following is a 272-amino-acid chain: Ethanolamine ammonia-lyase small subunit (272 aa).

Positions 161, 182, and 211 each coordinate adenosylcob(III)alamin.

Belongs to the EutC family. As to quaternary structure, the basic unit is a heterodimer which dimerizes to form tetramers. The heterotetramers trimerize; 6 large subunits form a core ring with 6 small subunits projecting outwards. Adenosylcob(III)alamin serves as cofactor.

The protein resides in the bacterial microcompartment. The catalysed reaction is ethanolamine = acetaldehyde + NH4(+). The protein operates within amine and polyamine degradation; ethanolamine degradation. Its function is as follows. Catalyzes the deamination of various vicinal amino-alcohols to oxo compounds. Allows this organism to utilize ethanolamine as the sole source of nitrogen and carbon in the presence of external vitamin B12. The protein is Ethanolamine ammonia-lyase small subunit of Xanthomonas campestris pv. campestris (strain B100).